Reading from the N-terminus, the 332-residue chain is Holliday junction branch migration complex subunit RuvB (332 aa).

The segment at 1-181 (MARILDNDVM…FGITGHMEYY (181 aa)) is large ATPase domain (RuvB-L). ATP-binding positions include Leu-20, Arg-21, Gly-62, Lys-65, Thr-66, Thr-67, 128–130 (EDF), Arg-171, Tyr-181, and Arg-218. A Mg(2+)-binding site is contributed by Thr-66. The small ATPAse domain (RuvB-S) stretch occupies residues 182 to 252 (QEKDLTEIVE…ITDRALTMLD (71 aa)). The interval 255 to 332 (REGLDYIDQK…RHLGYPYQNT (78 aa)) is head domain (RuvB-H). Positions 291, 310, 312, and 315 each coordinate DNA.

This sequence belongs to the RuvB family. In terms of assembly, homohexamer. Forms an RuvA(8)-RuvB(12)-Holliday junction (HJ) complex. HJ DNA is sandwiched between 2 RuvA tetramers; dsDNA enters through RuvA and exits via RuvB. An RuvB hexamer assembles on each DNA strand where it exits the tetramer. Each RuvB hexamer is contacted by two RuvA subunits (via domain III) on 2 adjacent RuvB subunits; this complex drives branch migration. In the full resolvosome a probable DNA-RuvA(4)-RuvB(12)-RuvC(2) complex forms which resolves the HJ.

Its subcellular location is the cytoplasm. It catalyses the reaction ATP + H2O = ADP + phosphate + H(+). In terms of biological role, the RuvA-RuvB-RuvC complex processes Holliday junction (HJ) DNA during genetic recombination and DNA repair, while the RuvA-RuvB complex plays an important role in the rescue of blocked DNA replication forks via replication fork reversal (RFR). RuvA specifically binds to HJ cruciform DNA, conferring on it an open structure. The RuvB hexamer acts as an ATP-dependent pump, pulling dsDNA into and through the RuvAB complex. RuvB forms 2 homohexamers on either side of HJ DNA bound by 1 or 2 RuvA tetramers; 4 subunits per hexamer contact DNA at a time. Coordinated motions by a converter formed by DNA-disengaged RuvB subunits stimulates ATP hydrolysis and nucleotide exchange. Immobilization of the converter enables RuvB to convert the ATP-contained energy into a lever motion, pulling 2 nucleotides of DNA out of the RuvA tetramer per ATP hydrolyzed, thus driving DNA branch migration. The RuvB motors rotate together with the DNA substrate, which together with the progressing nucleotide cycle form the mechanistic basis for DNA recombination by continuous HJ branch migration. Branch migration allows RuvC to scan DNA until it finds its consensus sequence, where it cleaves and resolves cruciform DNA. This chain is Holliday junction branch migration complex subunit RuvB, found in Streptococcus pyogenes serotype M3 (strain ATCC BAA-595 / MGAS315).